We begin with the raw amino-acid sequence, 348 residues long: NADH-cytochrome b5 reductase 2 (348 aa).

The helical transmembrane segment at 41–61 (TLLYGAAAAAVAGAGYYFLGG) threads the bilayer. The region spanning 97 to 202 (QGWVSLKLEE…KGPLPKYPWT (106 aa)) is the FAD-binding FR-type domain. Residue 205-240 (KHGHIALVAGGTGITPMFQLCRAIFNNPDDQTKVTL) participates in FAD binding.

The protein belongs to the flavoprotein pyridine nucleotide cytochrome reductase family. The cofactor is FAD.

Its subcellular location is the mitochondrion outer membrane. It carries out the reaction 2 Fe(III)-[cytochrome b5] + NADH = 2 Fe(II)-[cytochrome b5] + NAD(+) + H(+). Its function is as follows. May mediate the reduction of outer membrane cytochrome b5. The sequence is that of NADH-cytochrome b5 reductase 2 (MCR1) from Chaetomium globosum (strain ATCC 6205 / CBS 148.51 / DSM 1962 / NBRC 6347 / NRRL 1970) (Soil fungus).